We begin with the raw amino-acid sequence, 156 residues long: Small ribosomal subunit protein uS7 (156 aa).

The protein belongs to the universal ribosomal protein uS7 family. As to quaternary structure, part of the 30S ribosomal subunit. Contacts proteins S9 and S11.

One of the primary rRNA binding proteins, it binds directly to 16S rRNA where it nucleates assembly of the head domain of the 30S subunit. Is located at the subunit interface close to the decoding center, probably blocks exit of the E-site tRNA. The protein is Small ribosomal subunit protein uS7 of Bordetella bronchiseptica (strain ATCC BAA-588 / NCTC 13252 / RB50) (Alcaligenes bronchisepticus).